Consider the following 333-residue polypeptide: Ribose-phosphate pyrophosphokinase (333 aa).

58–60 provides a ligand contact to ATP; that stretch reads DGE. Mg(2+) contacts are provided by histidine 151 and aspartate 190. Lysine 214 is an active-site residue. D-ribose 5-phosphate-binding positions include arginine 216, aspartate 240, and 244-248; that span reads DTAGT.

It belongs to the ribose-phosphate pyrophosphokinase family. Class I subfamily. In terms of assembly, homohexamer. Mg(2+) is required as a cofactor.

The protein resides in the cytoplasm. It catalyses the reaction D-ribose 5-phosphate + ATP = 5-phospho-alpha-D-ribose 1-diphosphate + AMP + H(+). It functions in the pathway metabolic intermediate biosynthesis; 5-phospho-alpha-D-ribose 1-diphosphate biosynthesis; 5-phospho-alpha-D-ribose 1-diphosphate from D-ribose 5-phosphate (route I): step 1/1. Functionally, involved in the biosynthesis of the central metabolite phospho-alpha-D-ribosyl-1-pyrophosphate (PRPP) via the transfer of pyrophosphoryl group from ATP to 1-hydroxyl of ribose-5-phosphate (Rib-5-P). This Synechocystis sp. (strain ATCC 27184 / PCC 6803 / Kazusa) protein is Ribose-phosphate pyrophosphokinase.